We begin with the raw amino-acid sequence, 1489 residues long: DNA-directed RNA polymerase subunit beta (1489 aa).

This sequence belongs to the RNA polymerase beta chain family. In terms of assembly, the RNAP catalytic core consists of 2 alpha, 1 beta, 1 beta' and 1 omega subunit. When a sigma factor is associated with the core the holoenzyme is formed, which can initiate transcription.

The catalysed reaction is RNA(n) + a ribonucleoside 5'-triphosphate = RNA(n+1) + diphosphate. In terms of biological role, DNA-dependent RNA polymerase catalyzes the transcription of DNA into RNA using the four ribonucleoside triphosphates as substrates. In Koribacter versatilis (strain Ellin345), this protein is DNA-directed RNA polymerase subunit beta.